Consider the following 1387-residue polypeptide: DNA-directed RNA polymerase subunit beta'' (1387 aa).

Residues Cys-224, Cys-295, Cys-302, and Cys-305 each coordinate Zn(2+). Positions 883-903 (SHTGKRNDPAGSGLIPDNGSD) are disordered.

It belongs to the RNA polymerase beta' chain family. RpoC2 subfamily. In plastids the minimal PEP RNA polymerase catalytic core is composed of four subunits: alpha, beta, beta', and beta''. When a (nuclear-encoded) sigma factor is associated with the core the holoenzyme is formed, which can initiate transcription. The cofactor is Zn(2+).

Its subcellular location is the plastid. The protein localises to the chloroplast. It carries out the reaction RNA(n) + a ribonucleoside 5'-triphosphate = RNA(n+1) + diphosphate. In terms of biological role, DNA-dependent RNA polymerase catalyzes the transcription of DNA into RNA using the four ribonucleoside triphosphates as substrates. The polypeptide is DNA-directed RNA polymerase subunit beta'' (Platanus occidentalis (Sycamore)).